Reading from the N-terminus, the 395-residue chain is Tryptophan synthase beta chain (395 aa).

The residue at position 86 (Lys-86) is an N6-(pyridoxal phosphate)lysine.

The protein belongs to the TrpB family. Tetramer of two alpha and two beta chains. Requires pyridoxal 5'-phosphate as cofactor.

The catalysed reaction is (1S,2R)-1-C-(indol-3-yl)glycerol 3-phosphate + L-serine = D-glyceraldehyde 3-phosphate + L-tryptophan + H2O. Its pathway is amino-acid biosynthesis; L-tryptophan biosynthesis; L-tryptophan from chorismate: step 5/5. Its function is as follows. The beta subunit is responsible for the synthesis of L-tryptophan from indole and L-serine. The chain is Tryptophan synthase beta chain from Psychromonas ingrahamii (strain DSM 17664 / CCUG 51855 / 37).